The chain runs to 469 residues: MSNDSNLLATDIEEYLRVHENKDLMRFITCGSVDDGKSTLIGRLLFDSKMIFEDHMAAIEKDSKKFNTTDNDFDLSLLVDGLQSEREQGITIDVAYRYFATEQRKFIIADTPGHEQYTRNMVTGASTCDLAIILIDARYGVQVQTRRHSYICSLLGIKHLVVAVNKMDAVDYDQAVYKKIKADYREFAKQLNIADIRFVPISALKGDNVVNESENMTWYPGSPLLRLLNTIQIDTDINDKFRLAVQYVNRPNLDFRGFCGTVASGEIRVGDTIQALPSGKQSKVKSIVTFDGELESAFAGMAITLTLEDEIDISRGNMIVRPHEKPTSSKNFVADLVWMTEEALHVDREYIIKAGAHSTFGSVISINNKVDVNTMEKCEANQLVLNEIGSCNFEVAEALHFDRYSENRATGAFIMIDRLTNATVGAGMISGSVEALAKTAPEYSAFEVEFNALVRKHYPHWETKDITKL.

One can recognise a tr-type G domain in the interval 22-224 (KDLMRFITCG…NMTWYPGSPL (203 aa)). Residues 31 to 38 (GSVDDGKS) form a G1 region. 31–38 (GSVDDGKS) contributes to the GTP binding site. The G2 stretch occupies residues 89–93 (GITID). The interval 110 to 113 (DTPG) is G3. GTP-binding positions include 110–114 (DTPGH) and 165–168 (NKMD). A G4 region spans residues 165–168 (NKMD). The G5 stretch occupies residues 202 to 204 (SAL).

It belongs to the TRAFAC class translation factor GTPase superfamily. Classic translation factor GTPase family. CysN/NodQ subfamily. As to quaternary structure, heterodimer composed of CysD, the smaller subunit, and CysN.

It carries out the reaction sulfate + ATP + H(+) = adenosine 5'-phosphosulfate + diphosphate. It functions in the pathway sulfur metabolism; hydrogen sulfide biosynthesis; sulfite from sulfate: step 1/3. Functionally, with CysD forms the ATP sulfurylase (ATPS) that catalyzes the adenylation of sulfate producing adenosine 5'-phosphosulfate (APS) and diphosphate, the first enzymatic step in sulfur assimilation pathway. APS synthesis involves the formation of a high-energy phosphoric-sulfuric acid anhydride bond driven by GTP hydrolysis by CysN coupled to ATP hydrolysis by CysD. In Psychromonas ingrahamii (strain DSM 17664 / CCUG 51855 / 37), this protein is Sulfate adenylyltransferase subunit 1.